The sequence spans 138 residues: Basic phospholipase A2 vurtoxin (138 aa).

Residues 1–16 (MRTLWIVAVCLIGVEG) form the signal peptide. 7 disulfide bridges follow: Cys-42-Cys-131, Cys-44-Cys-60, Cys-59-Cys-111, Cys-65-Cys-138, Cys-66-Cys-104, Cys-73-Cys-97, and Cys-91-Cys-102. The Ca(2+) site is built by Tyr-43, Gly-45, and Gly-47. The active site involves His-63. A Ca(2+)-binding site is contributed by Asp-64. The active site involves Asp-105.

Ca(2+) is required as a cofactor. As to expression, expressed by the venom gland.

It is found in the secreted. It catalyses the reaction a 1,2-diacyl-sn-glycero-3-phosphocholine + H2O = a 1-acyl-sn-glycero-3-phosphocholine + a fatty acid + H(+). Functionally, snake venom phospholipase A2 that may have a strong anticoagulant activity. Is able to suppress the acetylcholine (ACh)-evoked current mediated by alpha-7 (CHRNA7)-similar nAChRs in L.stagnalis neurons (IC(50)=10.5 uM) and to compete with alpha-bungarotoxin for binding to muscle- and alpha-7 neuronal nAChR types, as well as to AChBPs. In inhibition of alpha-bungarotoxin binding, this toxin is mostly active against T.californica nAChR (IC(50)=0.26 uM), it is moderately active against human alpha-7 nAChR (IC(50)=14 uM), and is not active against L.stagnalis and A.californica AChBP (IC(50)&gt;30 uM). The chain is Basic phospholipase A2 vurtoxin from Vipera renardi (Steppe viper).